The chain runs to 450 residues: NAD-specific glutamate dehydrogenase (450 aa).

3 residues coordinate substrate: lysine 90, glutamine 111, and lysine 114. The active-site Proton donor is the lysine 126. Glycine 165 is a substrate binding site. NAD(+) is bound by residues threonine 210 and asparagine 241. Serine 381 lines the substrate pocket.

The protein belongs to the Glu/Leu/Phe/Val dehydrogenases family. Homohexamer.

It carries out the reaction L-glutamate + NAD(+) + H2O = 2-oxoglutarate + NH4(+) + NADH + H(+). Its pathway is amino-acid degradation; L-glutamate degradation via hydroxyglutarate pathway; crotonoyl-CoA from L-glutamate: step 1/5. This chain is NAD-specific glutamate dehydrogenase (gdh), found in Clostridium symbiosum (Bacteroides symbiosus).